The sequence spans 479 residues: Aspartyl/glutamyl-tRNA(Asn/Gln) amidotransferase subunit B (479 aa).

It belongs to the GatB/GatE family. GatB subfamily. As to quaternary structure, heterotrimer of A, B and C subunits.

It catalyses the reaction L-glutamyl-tRNA(Gln) + L-glutamine + ATP + H2O = L-glutaminyl-tRNA(Gln) + L-glutamate + ADP + phosphate + H(+). It carries out the reaction L-aspartyl-tRNA(Asn) + L-glutamine + ATP + H2O = L-asparaginyl-tRNA(Asn) + L-glutamate + ADP + phosphate + 2 H(+). In terms of biological role, allows the formation of correctly charged Asn-tRNA(Asn) or Gln-tRNA(Gln) through the transamidation of misacylated Asp-tRNA(Asn) or Glu-tRNA(Gln) in organisms which lack either or both of asparaginyl-tRNA or glutaminyl-tRNA synthetases. The reaction takes place in the presence of glutamine and ATP through an activated phospho-Asp-tRNA(Asn) or phospho-Glu-tRNA(Gln). The sequence is that of Aspartyl/glutamyl-tRNA(Asn/Gln) amidotransferase subunit B from Alcanivorax borkumensis (strain ATCC 700651 / DSM 11573 / NCIMB 13689 / SK2).